An 858-amino-acid polypeptide reads, in one-letter code: Elongation factor 2 (858 aa).

Residues 17-362 (ANIRNMSVIA…MITIHLPSPV (346 aa)) form the tr-type G domain. 26–33 (AHVDHGKS) contributes to the GTP binding site. T54 carries the phosphothreonine modification. T57 is modified (phosphothreonine; by EEF2K). T59 bears the Phosphothreonine mark. K152 is subject to N6-succinyllysine. Residues 158-161 (NKMD) and 216-218 (SGL) each bind GTP. K235 is modified (N6-acetyllysine). K239 bears the N6-acetyllysine; alternate mark. Residue K239 forms a Glycyl lysine isopeptide (Lys-Gly) (interchain with G-Cter in SUMO1); alternate linkage. At Y265 the chain carries Phosphotyrosine; by CSK. The residue at position 272 (K272) is an N6-acetyllysine; alternate. At K272 the chain carries N6-succinyllysine; alternate. An N6-acetyllysine modification is found at K275. K322 participates in a covalent cross-link: Glycyl lysine isopeptide (Lys-Gly) (interchain with G-Cter in SUMO). S325 bears the Phosphoserine mark. At Y373 the chain carries Phosphotyrosine; by CSK. T435 carries the post-translational modification Phosphothreonine. K439 and K445 each carry N6-acetyllysine. Residue S502 is modified to Phosphoserine. At K525 the chain carries N6,N6,N6-trimethyllysine; by EEF2KMT. Residue K529 forms a Glycyl lysine isopeptide (Lys-Gly) (interchain with G-Cter in SUMO) linkage. The residue at position 572 (K572) is an N6-succinyllysine. A Phosphoserine; by CDK2 modification is found at S595. K619 is modified (N6-acetyllysine). H715 bears the Diphthamide mark.

Belongs to the TRAFAC class translation factor GTPase superfamily. Classic translation factor GTPase family. EF-G/EF-2 subfamily. Binds to 80S ribosomes. Actively translating ribosomes show mutually exclusive binding of eIF5a (EIF5A or EIF5A2) and EEF2/eEF2. Interacts with SERBP1; interaction sequesters EEF2/eEF2 at the A-site of the ribosome, thereby blocking the interaction sites of the mRNA-tRNA complex, promoting ribosome stabilization and hibernation. Interacts with HABP4; interaction takes place at the A-site of hibernating ribosomes and promotes ribosome stabilization. Component of the mRNA surveillance SURF complex, at least composed of ERF1, ERF3 (ERF3A or ERF3B), EEF2, UPF1/RENT1, SMG1, SMG8 and SMG9. Interacts with RBPMS2. Diphthamide is 2-[3-carboxyamido-3-(trimethyl-ammonio)propyl]histidine. In terms of processing, phosphorylation by EF-2 kinase completely inactivates EF-2; it requires prior phosphorylation by CDK2 at Ser-595 during mitotic prometaphase. Phosphorylation by CSK promotes SUMOylation, proteolytic cleavage, and nuclear translocation if the C-terminal fragment. Post-translationally, proteolytically processed at two sites following phosphorylation by CSK. SUMOylated following phosphorylation by CSK, promotes proteolytic cleavage. In terms of processing, ISGylated.

Its subcellular location is the cytoplasm. The protein localises to the nucleus. It catalyses the reaction GTP + H2O = GDP + phosphate + H(+). Catalyzes the GTP-dependent ribosomal translocation step during translation elongation. During this step, the ribosome changes from the pre-translocational (PRE) to the post-translocational (POST) state as the newly formed A-site-bound peptidyl-tRNA and P-site-bound deacylated tRNA move to the P and E sites, respectively. Catalyzes the coordinated movement of the two tRNA molecules, the mRNA and conformational changes in the ribosome. This is Elongation factor 2 (Eef2) from Rattus norvegicus (Rat).